Reading from the N-terminus, the 106-residue chain is Urease subunit beta (106 aa).

Belongs to the urease beta subunit family. Heterotrimer of UreA (gamma), UreB (beta) and UreC (alpha) subunits. Three heterotrimers associate to form the active enzyme.

The protein resides in the cytoplasm. The enzyme catalyses urea + 2 H2O + H(+) = hydrogencarbonate + 2 NH4(+). The protein operates within nitrogen metabolism; urea degradation; CO(2) and NH(3) from urea (urease route): step 1/1. The polypeptide is Urease subunit beta (Synechococcus sp. (strain CC9605)).